Consider the following 156-residue polypeptide: Small ribosomal subunit protein uS7 (156 aa).

Belongs to the universal ribosomal protein uS7 family. As to quaternary structure, part of the 30S ribosomal subunit. Contacts proteins S9 and S11.

In terms of biological role, one of the primary rRNA binding proteins, it binds directly to 16S rRNA where it nucleates assembly of the head domain of the 30S subunit. Is located at the subunit interface close to the decoding center, probably blocks exit of the E-site tRNA. In Ruminiclostridium cellulolyticum (strain ATCC 35319 / DSM 5812 / JCM 6584 / H10) (Clostridium cellulolyticum), this protein is Small ribosomal subunit protein uS7.